A 630-amino-acid polypeptide reads, in one-letter code: Transposase B from transposon PsiTn554 (630 aa).

Residues Thr216–His302 enclose the Core-binding (CB) domain. The Tyr recombinase domain maps to Ala326–Thr513. Active-site residues include Arg363, Lys391, His465, Arg468, and His491. The active-site O-(3'-phospho-DNA)-tyrosine intermediate is Tyr500.

Belongs to the 'phage' integrase family.

The protein is Transposase B from transposon PsiTn554 (tnpB) of Staphylococcus aureus.